Here is a 405-residue protein sequence, read N- to C-terminus: uncharacterized protein (405 aa).

12 helical membrane-spanning segments follow: residues 19 to 39, 48 to 68, 85 to 105, 129 to 149, 156 to 176, 178 to 198, 224 to 244, 252 to 272, 283 to 303, 309 to 329, 344 to 364, and 366 to 386; these read IVSIVMFNFASYLTIGLPLAV, MGFSAFWAGLIISLQYFATLL, IVVFGLCGCFLSGLGYLLADI, SFAGTGSTLWGVGVVGSLHIG, GIVTYGAMAMGAPLGVLCYAW, GLQGLALTVMGVALLAVLLAL, GMALALASAGFGVIATFITLF, GAAFALTLFSVAFVGTRLLFP, VAMICFGVEIIGLLLVGTAAM, IGVLLTGMGFSLVFPALGVVA, TYTVFMDMSLGVTGPLAGLVM, and WAGVPVIYLAAAGLVAMALLL.

This sequence belongs to the major facilitator superfamily. YhhS family.

It localises to the cell inner membrane. This is an uncharacterized protein from Salmonella typhi.